We begin with the raw amino-acid sequence, 100 residues long: Small ribosomal subunit protein bS20 (100 aa).

Belongs to the bacterial ribosomal protein bS20 family.

Binds directly to 16S ribosomal RNA. The protein is Small ribosomal subunit protein bS20 of Synechococcus sp. (strain JA-3-3Ab) (Cyanobacteria bacterium Yellowstone A-Prime).